Consider the following 556-residue polypeptide: Undecaprenyl phosphate-alpha-4-amino-4-deoxy-L-arabinose arabinosyl transferase (556 aa).

11 consecutive transmembrane segments (helical) span residues 5–25 (MIKL…LLPL), 88–108 (FASV…ALLL), 116–136 (LLAA…TYSV), 179–199 (FMTK…PVAL), 207–227 (LLLF…PWAL), 258–278 (APFW…LALL), 296–316 (FLLL…KGKL), 319–339 (YILP…SGLA), 355–375 (LAFG…IIMP), 384–404 (LTIV…AVSL), and 410–430 (WGYL…GSIP).

This sequence belongs to the glycosyltransferase 83 family.

It is found in the cell inner membrane. The catalysed reaction is 4-amino-4-deoxy-alpha-L-arabinopyranosyl di-trans,octa-cis-undecaprenyl phosphate + lipid IVA = lipid IIA + di-trans,octa-cis-undecaprenyl phosphate.. It functions in the pathway lipopolysaccharide metabolism; 4-amino-4-deoxy-beta-L-arabinose-lipid A biosynthesis. Functionally, catalyzes the transfer of the L-Ara4N moiety of the glycolipid undecaprenyl phosphate-alpha-L-Ara4N to lipid A. The modified arabinose is attached to lipid A and is required for resistance to polymyxin and cationic antimicrobial peptides. In Pectobacterium carotovorum subsp. carotovorum (strain PC1), this protein is Undecaprenyl phosphate-alpha-4-amino-4-deoxy-L-arabinose arabinosyl transferase.